Here is a 251-residue protein sequence, read N- to C-terminus: Phosphate import ATP-binding protein PstB 2 (251 aa).

The ABC transporter domain maps to 5–246 (ITSKDVHLSY…PKKQITSDYL (242 aa)). ATP is bound at residue 37–44 (GPSGCGKS).

It belongs to the ABC transporter superfamily. Phosphate importer (TC 3.A.1.7) family. The complex is composed of two ATP-binding proteins (PstB), two transmembrane proteins (PstC and PstA) and a solute-binding protein (PstS).

The protein localises to the cell membrane. The enzyme catalyses phosphate(out) + ATP + H2O = ADP + 2 phosphate(in) + H(+). Part of the ABC transporter complex PstSACB involved in phosphate import. Responsible for energy coupling to the transport system. In Lactobacillus johnsonii (strain CNCM I-12250 / La1 / NCC 533), this protein is Phosphate import ATP-binding protein PstB 2.